Consider the following 497-residue polypeptide: Glycogen synthase (497 aa).

Lysine 15 serves as a coordination point for ADP-alpha-D-glucose.

This sequence belongs to the glycosyltransferase 1 family. Bacterial/plant glycogen synthase subfamily.

It carries out the reaction [(1-&gt;4)-alpha-D-glucosyl](n) + ADP-alpha-D-glucose = [(1-&gt;4)-alpha-D-glucosyl](n+1) + ADP + H(+). It participates in glycan biosynthesis; glycogen biosynthesis. In terms of biological role, synthesizes alpha-1,4-glucan chains using ADP-glucose. The chain is Glycogen synthase from Thermodesulfovibrio yellowstonii (strain ATCC 51303 / DSM 11347 / YP87).